We begin with the raw amino-acid sequence, 145 residues long: Large-conductance mechanosensitive channel (145 aa).

Helical transmembrane passes span 14-34, 38-58, and 81-101; these read VMDLAVGVIIGGAFGGIVKSL, LIMPIVGAIFGGFDFSNYFLP, and GSFLTVLINFLILAWIIFLMV.

The protein belongs to the MscL family. Homopentamer.

The protein localises to the cell inner membrane. Its function is as follows. Channel that opens in response to stretch forces in the membrane lipid bilayer. May participate in the regulation of osmotic pressure changes within the cell. In Rhizobium etli (strain CIAT 652), this protein is Large-conductance mechanosensitive channel.